Here is a 214-residue protein sequence, read N- to C-terminus: Urease accessory protein UreF (214 aa).

It belongs to the UreF family. In terms of assembly, ureD, UreF and UreG form a complex that acts as a GTP-hydrolysis-dependent molecular chaperone, activating the urease apoprotein by helping to assemble the nickel containing metallocenter of UreC. The UreE protein probably delivers the nickel.

It is found in the cytoplasm. Functionally, required for maturation of urease via the functional incorporation of the urease nickel metallocenter. This chain is Urease accessory protein UreF, found in Ruegeria sp. (strain TM1040) (Silicibacter sp.).